Here is a 326-residue protein sequence, read N- to C-terminus: 3-isopropylmalate dehydrogenase (326 aa).

Residues R81, R91, R112, and D198 each coordinate substrate. Mg(2+)-binding residues include D198, D222, and D226. 255-267 (GAAFDIAGKGIAN) serves as a coordination point for NAD(+).

It belongs to the isocitrate and isopropylmalate dehydrogenases family. Homotetramer. Requires Mg(2+) as cofactor. It depends on Mn(2+) as a cofactor.

The protein localises to the cytoplasm. It carries out the reaction (2R,3S)-3-isopropylmalate + NAD(+) = 4-methyl-2-oxopentanoate + CO2 + NADH. Its pathway is amino-acid biosynthesis; L-leucine biosynthesis; L-leucine from 3-methyl-2-oxobutanoate: step 3/4. Its function is as follows. Catalyzes the oxidation of 3-carboxy-2-hydroxy-4-methylpentanoate (3-isopropylmalate) to 3-carboxy-4-methyl-2-oxopentanoate. The product decarboxylates to 4-methyl-2 oxopentanoate. The chain is 3-isopropylmalate dehydrogenase (leuB) from Archaeoglobus fulgidus (strain ATCC 49558 / DSM 4304 / JCM 9628 / NBRC 100126 / VC-16).